The primary structure comprises 113 residues: Large ribosomal subunit protein uL24 (113 aa).

Belongs to the universal ribosomal protein uL24 family. In terms of assembly, part of the 50S ribosomal subunit.

One of two assembly initiator proteins, it binds directly to the 5'-end of the 23S rRNA, where it nucleates assembly of the 50S subunit. Functionally, one of the proteins that surrounds the polypeptide exit tunnel on the outside of the subunit. The sequence is that of Large ribosomal subunit protein uL24 from Chlamydia abortus (strain DSM 27085 / S26/3) (Chlamydophila abortus).